The sequence spans 168 residues: Cilia- and flagella-associated protein 276 (168 aa).

Disordered regions lie at residues 35–61 and 149–168; these read AHLA…RDTF and HTAA…FFST. The segment covering 38–55 has biased composition (polar residues); it reads AQQQDPWSRLSSTPTATS.

In terms of assembly, microtubule inner protein component of sperm flagellar doublet microtubules. As to expression, predominantly expressed in nervous system tissues, such as the spinal cord, cerebrum, cerebellum, and sciatic nerve.

The protein localises to the cytoplasm. Its subcellular location is the cytoskeleton. The protein resides in the cilium axoneme. It is found in the flagellum axoneme. Functionally, microtubule inner protein (MIP) part of the dynein-decorated doublet microtubules (DMTs) in cilia axoneme, which is required for motile cilia beating. May play an important role for the maintenance of myelin-axon integrity. May affect intracellular Ca(2+) homeostasis. The sequence is that of Cilia- and flagella-associated protein 276 from Mus musculus (Mouse).